The following is a 583-amino-acid chain: Aspartate--tRNA ligase (583 aa).

E174 is a binding site for L-aspartate. The segment at Q198–K201 is aspartate. Position 220 (R220) interacts with L-aspartate. Residues R220–E222 and Q229 each bind ATP. An L-aspartate-binding site is contributed by H443. E477 contacts ATP. Position 484 (R484) interacts with L-aspartate. G529–R532 lines the ATP pocket.

Belongs to the class-II aminoacyl-tRNA synthetase family. Type 1 subfamily. As to quaternary structure, homodimer.

The protein resides in the cytoplasm. The catalysed reaction is tRNA(Asp) + L-aspartate + ATP = L-aspartyl-tRNA(Asp) + AMP + diphosphate. In terms of biological role, catalyzes the attachment of L-aspartate to tRNA(Asp) in a two-step reaction: L-aspartate is first activated by ATP to form Asp-AMP and then transferred to the acceptor end of tRNA(Asp). This chain is Aspartate--tRNA ligase, found in Streptococcus thermophilus (strain ATCC BAA-250 / LMG 18311).